The sequence spans 237 residues: Phosphoribosylaminoimidazole-succinocarboxamide synthase (237 aa).

Belongs to the SAICAR synthetase family.

The enzyme catalyses 5-amino-1-(5-phospho-D-ribosyl)imidazole-4-carboxylate + L-aspartate + ATP = (2S)-2-[5-amino-1-(5-phospho-beta-D-ribosyl)imidazole-4-carboxamido]succinate + ADP + phosphate + 2 H(+). It functions in the pathway purine metabolism; IMP biosynthesis via de novo pathway; 5-amino-1-(5-phospho-D-ribosyl)imidazole-4-carboxamide from 5-amino-1-(5-phospho-D-ribosyl)imidazole-4-carboxylate: step 1/2. This chain is Phosphoribosylaminoimidazole-succinocarboxamide synthase, found in Listeria monocytogenes serotype 4b (strain CLIP80459).